The sequence spans 189 residues: MNCARLHQRIPLRAMALTTTSYPALAPSHSFANASTSVMTASAMAVAHRAAATTGASDATTTAQVVHYSKLGMDGFTDIKFNTAADELLELVETKVDALDSAAVEDVSCNGGVLTLETTERGTFILNKQAPNVQLWLSSPISGPHHYDMITVTQDGHEKVSWKSDHDGHDLVKKLEKELTEVLGTAFKL.

A mitochondrion-targeting transit peptide spans 1-50 (MNCARLHQRIPLRAMALTTTSYPALAPSHSFANASTSVMTASAMAVAHRA).

It belongs to the frataxin family. Interacts with IscU; the interaction is direct.

Its subcellular location is the mitochondrion. It catalyses the reaction 4 Fe(2+) + O2 + 4 H(+) = 4 Fe(3+) + 2 H2O. In terms of biological role, iron-binding protein which binds 2 iron atoms per monomer. Probably, acts as an iron carrier for the biosynthesis of Fe-S clusters. Stimulates the cysteine desulphurase activity of IscS in the presence of IscU. In Leishmania donovani, this protein is Frataxin-like protein, mitochondrial.